Here is a 605-residue protein sequence, read N- to C-terminus: MTATRHPFASDIDAATRIAEPDFDLLDALVRTDDPDDQAHTLARVVLAAFDNYYAVSRRIPALAQAAFEARDWAATVRLSKIRLGLYTACIDQLVPLLKAGLPELANDEQLWARAEAELLAAIAERYEADFAFAFWQSLRRKLVSDEWRPVSYDTGPAARPKATSAAILKTIATTLPIRPAVIRDILDGAGLRGPWRDRDGDAALAAAAIEAALEPLGPRAGETAKIEIAESGFFRNRGACLVGRVRLRDRGDMPMRNLPLLIALLNEDDGLVVDAVLCDADELQYAFSSTLANYHATNPHYHELARLLHELMPKRPLGTQYSCIGFHHLGKVAVMTEILAEHRRSKEKLDTAPGFKGTVAIAFTMPSSAYVLKIIRDHPTDDYKFDYFDGLDAVLRKYNLVHEIDRAGSMLDNIIYSNVKLERTMFAPDLLDELLESGIDTVTLERGALVFRHLIVQIKLTPLPLYLTTASAADARAAVINLGDCIKNNAAADIFNKDLDGRNYGVSRIRKVYLFDYDAVEPLTDVRVRGDDAPPGPEFEDGVVFRPADMLGGLRIDDPALRRAFRDAHPELMQPEYWQGMQRALRAGKVPRVMNYPAARRLRR.

Residues 353-359 (APGFKGT) and lysine 374 each bind ATP. Residue aspartate 413 is part of the active site.

The protein belongs to the AceK family.

It localises to the cytoplasm. The catalysed reaction is L-seryl-[isocitrate dehydrogenase] + ATP = O-phospho-L-seryl-[isocitrate dehydrogenase] + ADP + H(+). In terms of biological role, bifunctional enzyme which can phosphorylate or dephosphorylate isocitrate dehydrogenase (IDH) on a specific serine residue. This is a regulatory mechanism which enables bacteria to bypass the Krebs cycle via the glyoxylate shunt in response to the source of carbon. When bacteria are grown on glucose, IDH is fully active and unphosphorylated, but when grown on acetate or ethanol, the activity of IDH declines drastically concomitant with its phosphorylation. In Rhodopseudomonas palustris (strain HaA2), this protein is Isocitrate dehydrogenase kinase/phosphatase.